Consider the following 251-residue polypeptide: NLP effector protein Pc129485 (251 aa).

Residues 1 to 19 (MNFRIVLLVLVASLAGAQA) form the signal peptide. The short motif at 127–133 (GHRHNWE) is the Hepta-peptide GHRHDWE motif element. N-linked (GlcNAc...) asparagine glycosylation is found at N146 and N218.

It belongs to the Necrosis inducing protein (NPP1) family.

It is found in the secreted. In terms of biological role, secreted effector that contributes strongly to virulence during infection by P.capsici. This Phytophthora capsici protein is NLP effector protein Pc129485.